A 465-amino-acid polypeptide reads, in one-letter code: ATP synthase subunit beta (465 aa).

Residue 152-159 coordinates ATP; the sequence is GGAGVGKT.

Belongs to the ATPase alpha/beta chains family. As to quaternary structure, F-type ATPases have 2 components, CF(1) - the catalytic core - and CF(0) - the membrane proton channel. CF(1) has five subunits: alpha(3), beta(3), gamma(1), delta(1), epsilon(1). CF(0) has three main subunits: a(1), b(2) and c(9-12). The alpha and beta chains form an alternating ring which encloses part of the gamma chain. CF(1) is attached to CF(0) by a central stalk formed by the gamma and epsilon chains, while a peripheral stalk is formed by the delta and b chains.

It localises to the cell inner membrane. It catalyses the reaction ATP + H2O + 4 H(+)(in) = ADP + phosphate + 5 H(+)(out). Its function is as follows. Produces ATP from ADP in the presence of a proton gradient across the membrane. The catalytic sites are hosted primarily by the beta subunits. The chain is ATP synthase subunit beta from Campylobacter hominis (strain ATCC BAA-381 / DSM 21671 / CCUG 45161 / LMG 19568 / NCTC 13146 / CH001A).